Consider the following 328-residue polypeptide: Arabinose 5-phosphate isomerase KdsD (328 aa).

In terms of domain architecture, SIS spans 41–184 (ACEKMFNCTG…AVALLKARGF (144 aa)). Residues 75 to 76 (GT), H82, H88, 114 to 123 (ALIPVLKRLH), and 148 to 150 (KVP) each bind substrate. Position 82 (H82) interacts with Zn(2+). The region spanning 210–268 (MHTGDEIPHVNKHATLRDALLEITRKNLGMTVICDESMKIDGIFTDGDLRRVFDMGGDM) is the CBS 1 domain. E275 is a substrate binding site. Residues 277-328 (MTPGGIRVRPGILAVDALNLMQSRHITSVLVADGDQLLGVLHMHDLLRAGVV) enclose the CBS 2 domain.

The protein belongs to the SIS family. GutQ/KpsF subfamily. Homotetramer.

It catalyses the reaction D-arabinose 5-phosphate = D-ribulose 5-phosphate. Its pathway is carbohydrate biosynthesis; 3-deoxy-D-manno-octulosonate biosynthesis; 3-deoxy-D-manno-octulosonate from D-ribulose 5-phosphate: step 1/3. It participates in bacterial outer membrane biogenesis; lipopolysaccharide biosynthesis. Functionally, involved in the biosynthesis of 3-deoxy-D-manno-octulosonate (KDO), a unique 8-carbon sugar component of lipopolysaccharides (LPSs). Catalyzes the reversible aldol-ketol isomerization between D-ribulose 5-phosphate (Ru5P) and D-arabinose 5-phosphate (A5P). In Salmonella typhimurium (strain LT2 / SGSC1412 / ATCC 700720), this protein is Arabinose 5-phosphate isomerase KdsD (kdsD).